Consider the following 486-residue polypeptide: MTLTIYNTLTRQKEPFEPLEPGKVRMYCCGITVYDYCHLGHARTCLVWDVVRRYLQWRGYQVQYIQNFTDIDDKILNRARKEGTSMEDVSERFIKAYFEDMDRLHIQKADAYPRATHTLDGIKRLVYELEQKGYAYPADGDVYYSVRSFSDYGKLSGRKLEDLQAGASGRVDLEDSESQKKKDPFDFALWKAAKPGEPSWESPWGLGRPGWHIECSAMVRERLGETIDIHVGGSDLIFPHHENEIAQSEAATGKPLARYWMHNGMVKVGGEKMSKSLGNFTTIRDLLAQFDPMAVRLFILQTHYRNPLDFTPKALEAATNGWQTLQEGLLFGYLFGEKLGWDQLSSNSSVREDNPLVQQFQDAVDDDFNFAGGLAVLFEIAKDLRKEGNILVHQEKTETSPEKLKEQWQTLVQLSQVLGLEAHPPQVHRETTDGLTDAEIETLIEQRTQARKAKNFAEGDRIRDDLKAKGITLIDQSGGITKWHRS.

Cysteine 29 contributes to the Zn(2+) binding site. The 'HIGH' region signature appears at 31–41; it reads ITVYDYCHLGH. Positions 215, 240, and 244 each coordinate Zn(2+). The 'KMSKS' region signature appears at 272 to 276; sequence KMSKS. Lysine 275 contributes to the ATP binding site.

It belongs to the class-I aminoacyl-tRNA synthetase family. In terms of assembly, monomer. Zn(2+) serves as cofactor.

The protein localises to the cytoplasm. It carries out the reaction tRNA(Cys) + L-cysteine + ATP = L-cysteinyl-tRNA(Cys) + AMP + diphosphate. This is Cysteine--tRNA ligase from Gloeothece citriformis (strain PCC 7424) (Cyanothece sp. (strain PCC 7424)).